Here is a 375-residue protein sequence, read N- to C-terminus: Alpha-1,2-galactosyltransferase (375 aa).

Residues 1-2 are Cytoplasmic-facing; that stretch reads MR. Residues 3–23 traverse the membrane as a helical; Signal-anchor for type II membrane protein segment; it reads FAPYLISAVVITTIILGGAWW. At 24–375 the chain is on the lumenal side; it reads TSAMDTKLQT…HIQNLLKPSS (352 aa).

Belongs to the glycosyltransferase 34 family. In terms of processing, O-glycosylated.

It localises to the golgi apparatus membrane. Functionally, involved in the O- and N-linked oligosaccharide modification of proteins transported through the Golgi stack. This occurs in cis Golgi where the enzyme transfers galactose from UDP-galactose to a variety of mannose based acceptors. The chain is Alpha-1,2-galactosyltransferase (gma12) from Schizosaccharomyces pombe (strain 972 / ATCC 24843) (Fission yeast).